We begin with the raw amino-acid sequence, 388 residues long: Chorismate synthase (388 aa).

NADP(+)-binding residues include R39 and R45. The interval 95 to 118 (EKNEKSRRVSRPRPGHADLVGGMK) is disordered. Residues 130–132 (RSS), 251–252 (NA), G296, 311–315 (KPIPT), and R337 contribute to the FMN site.

It belongs to the chorismate synthase family. Homotetramer. It depends on FMNH2 as a cofactor.

The catalysed reaction is 5-O-(1-carboxyvinyl)-3-phosphoshikimate = chorismate + phosphate. The protein operates within metabolic intermediate biosynthesis; chorismate biosynthesis; chorismate from D-erythrose 4-phosphate and phosphoenolpyruvate: step 7/7. In terms of biological role, catalyzes the anti-1,4-elimination of the C-3 phosphate and the C-6 proR hydrogen from 5-enolpyruvylshikimate-3-phosphate (EPSP) to yield chorismate, which is the branch point compound that serves as the starting substrate for the three terminal pathways of aromatic amino acid biosynthesis. This reaction introduces a second double bond into the aromatic ring system. The polypeptide is Chorismate synthase (Listeria innocua serovar 6a (strain ATCC BAA-680 / CLIP 11262)).